Here is a 361-residue protein sequence, read N- to C-terminus: Porphobilinogen deaminase (361 aa).

Residue serine 2 is modified to N-acetylserine. Serine 69 is subject to Phosphoserine. The residue at position 74 (lysine 74) is an N6-acetyllysine. At serine 147 the chain carries Phosphoserine. Position 261 is an S-(dipyrrolylmethanemethyl)cysteine (cysteine 261).

This sequence belongs to the HMBS family. Monomer. The cofactor is dipyrromethane.

The protein resides in the cytoplasm. The protein localises to the cytosol. The catalysed reaction is 4 porphobilinogen + H2O = hydroxymethylbilane + 4 NH4(+). It participates in porphyrin-containing compound metabolism; protoporphyrin-IX biosynthesis; coproporphyrinogen-III from 5-aminolevulinate: step 2/4. Its function is as follows. As part of the heme biosynthetic pathway, catalyzes the sequential polymerization of four molecules of porphobilinogen to form hydroxymethylbilane, also known as preuroporphyrinogen. Catalysis begins with the assembly of the dipyrromethane cofactor by the apoenzyme from two molecules of porphobilinogen or from preuroporphyrinogen. The covalently linked cofactor acts as a primer, around which the tetrapyrrole product is assembled. In the last step of catalysis, the product, preuroporphyrinogen, is released, leaving the cofactor bound to the holodeaminase intact. The chain is Porphobilinogen deaminase (Hmbs) from Mus musculus (Mouse).